Here is a 190-residue protein sequence, read N- to C-terminus: 7-methyl-GTP pyrophosphatase (190 aa).

Aspartate 69 functions as the Proton acceptor in the catalytic mechanism.

The protein belongs to the Maf family. YceF subfamily. A divalent metal cation is required as a cofactor.

Its subcellular location is the cytoplasm. It carries out the reaction N(7)-methyl-GTP + H2O = N(7)-methyl-GMP + diphosphate + H(+). Its function is as follows. Nucleoside triphosphate pyrophosphatase that hydrolyzes 7-methyl-GTP (m(7)GTP). May have a dual role in cell division arrest and in preventing the incorporation of modified nucleotides into cellular nucleic acids. This is 7-methyl-GTP pyrophosphatase from Xanthomonas axonopodis pv. citri (strain 306).